The sequence spans 297 residues: Calponin-1 (297 aa).

The region spanning 28–131 (HQREQELREW…STLLALASMA (104 aa)) is the Calponin-homology (CH) domain. Calponin-like repeat units lie at residues 164–189 (IGLQ…RHLY), 204–229 (ISLQ…RQIF), and 243–268 (VSLQ…RQVY). Position 170 is a phosphothreonine; by ROCK2 (T170). Position 175 is a phosphoserine; by ROCK2 (S175). A phosphothreonine; by ROCK2 mark is found at T180 and T184. Position 259 is a phosphothreonine; by ROCK2 (T259).

Belongs to the calponin family. In terms of assembly, part of cGMP kinase signaling complex at least composed of ACTA2/alpha-actin, CNN1/calponin H1, PLN/phospholamban, PRKG1 and ITPR1. As to expression, smooth muscle, and tissues containing significant amounts of smooth muscle.

Functionally, thin filament-associated protein that is implicated in the regulation and modulation of smooth muscle contraction. It is capable of binding to actin, calmodulin and tropomyosin. The interaction of calponin with actin inhibits the actomyosin Mg-ATPase activity. The chain is Calponin-1 (Cnn1) from Mus musculus (Mouse).